The sequence spans 395 residues: Elongation factor Tu (395 aa).

In terms of domain architecture, tr-type G spans 10–204; sequence KPHVNIGTIG…AVDSYIPTPQ (195 aa). The tract at residues 19-26 is G1; the sequence is GHVDHGKT. Residue 19–26 participates in GTP binding; that stretch reads GHVDHGKT. Thr-26 contributes to the Mg(2+) binding site. The tract at residues 60–64 is G2; it reads GITIN. A G3 region spans residues 81–84; sequence DCPG. Residues 81 to 85 and 136 to 139 each bind GTP; these read DCPGH and NKCD. A G4 region spans residues 136–139; the sequence is NKCD. A G5 region spans residues 174–176; that stretch reads SAL.

This sequence belongs to the TRAFAC class translation factor GTPase superfamily. Classic translation factor GTPase family. EF-Tu/EF-1A subfamily. In terms of assembly, monomer.

Its subcellular location is the cytoplasm. The enzyme catalyses GTP + H2O = GDP + phosphate + H(+). In terms of biological role, GTP hydrolase that promotes the GTP-dependent binding of aminoacyl-tRNA to the A-site of ribosomes during protein biosynthesis. In Symbiobacterium thermophilum (strain DSM 24528 / JCM 14929 / IAM 14863 / T), this protein is Elongation factor Tu.